A 210-amino-acid polypeptide reads, in one-letter code: Ribosomal RNA small subunit methyltransferase G (210 aa).

Residues G76, L81, 127 to 128, and R142 each bind S-adenosyl-L-methionine; that span reads VE.

The protein belongs to the methyltransferase superfamily. RNA methyltransferase RsmG family.

Its subcellular location is the cytoplasm. It catalyses the reaction guanosine(527) in 16S rRNA + S-adenosyl-L-methionine = N(7)-methylguanosine(527) in 16S rRNA + S-adenosyl-L-homocysteine. Its function is as follows. Specifically methylates the N7 position of guanine in position 527 of 16S rRNA. The polypeptide is Ribosomal RNA small subunit methyltransferase G (Vibrio cholerae serotype O1 (strain ATCC 39315 / El Tor Inaba N16961)).